A 427-amino-acid chain; its full sequence is Trigger factor (427 aa).

Positions 163–248 constitute a PPIase FKBP-type domain; that stretch reads GDTVVIDFVG…VHEVKAKEVP (86 aa).

This sequence belongs to the FKBP-type PPIase family. Tig subfamily.

The protein resides in the cytoplasm. The catalysed reaction is [protein]-peptidylproline (omega=180) = [protein]-peptidylproline (omega=0). Its function is as follows. Involved in protein export. Acts as a chaperone by maintaining the newly synthesized protein in an open conformation. Functions as a peptidyl-prolyl cis-trans isomerase. This is Trigger factor from Streptococcus equi subsp. zooepidemicus (strain H70).